Here is a 169-residue protein sequence, read N- to C-terminus: Peptide deformylase (169 aa).

Positions 91 and 133 each coordinate Fe cation. Residue glutamate 134 is part of the active site. Fe cation is bound at residue histidine 137.

Belongs to the polypeptide deformylase family. Requires Fe(2+) as cofactor.

It catalyses the reaction N-terminal N-formyl-L-methionyl-[peptide] + H2O = N-terminal L-methionyl-[peptide] + formate. In terms of biological role, removes the formyl group from the N-terminal Met of newly synthesized proteins. Requires at least a dipeptide for an efficient rate of reaction. N-terminal L-methionine is a prerequisite for activity but the enzyme has broad specificity at other positions. In Aliivibrio salmonicida (strain LFI1238) (Vibrio salmonicida (strain LFI1238)), this protein is Peptide deformylase.